Reading from the N-terminus, the 251-residue chain is 3-deoxy-manno-octulosonate cytidylyltransferase (251 aa).

This sequence belongs to the KdsB family.

It is found in the cytoplasm. It carries out the reaction 3-deoxy-alpha-D-manno-oct-2-ulosonate + CTP = CMP-3-deoxy-beta-D-manno-octulosonate + diphosphate. Its pathway is nucleotide-sugar biosynthesis; CMP-3-deoxy-D-manno-octulosonate biosynthesis; CMP-3-deoxy-D-manno-octulosonate from 3-deoxy-D-manno-octulosonate and CTP: step 1/1. It participates in bacterial outer membrane biogenesis; lipopolysaccharide biosynthesis. Functionally, activates KDO (a required 8-carbon sugar) for incorporation into bacterial lipopolysaccharide in Gram-negative bacteria. The polypeptide is 3-deoxy-manno-octulosonate cytidylyltransferase (Chromobacterium violaceum (strain ATCC 12472 / DSM 30191 / JCM 1249 / CCUG 213 / NBRC 12614 / NCIMB 9131 / NCTC 9757 / MK)).